We begin with the raw amino-acid sequence, 439 residues long: Na(+)/H(+) antiporter NhaA (439 aa).

11 helical membrane-spanning segments follow: residues 12–32 (SMNIAASILLFVAAIAAAIIA), 67–87 (MIEFINDGLMTIFFLLVGLEI), 103–123 (ALPFIAACGGMLFPVIVYMSI), 133–153 (GLAIPMATDIAFSLGVLSLLG), 162–182 (IFLTAFAVVDDIGGILVIALF), 186–206 (HVSYGYILIAALLYVLLYFIG), 214–234 (IFFLVIGVVIWYLFLQSGIHS), 314–334 (ILPLFAFVNAGVVFSGGGELV), 341–361 (VAAGLLFGKFAGIYFFTWLAI), 379–399 (GIALLGGIGFTVSLFIANLSF), and 412–432 (FGVLSGTILSGLLGYIVLRIV).

It belongs to the NhaA Na(+)/H(+) (TC 2.A.33) antiporter family.

The protein resides in the cell inner membrane. The enzyme catalyses Na(+)(in) + 2 H(+)(out) = Na(+)(out) + 2 H(+)(in). Functionally, na(+)/H(+) antiporter that extrudes sodium in exchange for external protons. In Bacteroides thetaiotaomicron (strain ATCC 29148 / DSM 2079 / JCM 5827 / CCUG 10774 / NCTC 10582 / VPI-5482 / E50), this protein is Na(+)/H(+) antiporter NhaA.